The primary structure comprises 571 residues: La-related protein 7 (571 aa).

At Met-1 the chain carries N-acetylmethionine. Over residues 1 to 17 (METENQKTMEESTEKRK) the composition is skewed to basic and acidic residues. Disordered stretches follow at residues 1–25 (METE…KRSR) and 181–366 (LNNP…ERHK). The 95-residue stretch at 23 to 117 (RSRVKQVLAD…KPLGERPKDE (95 aa)) folds into the HTH La-type RNA-binding domain. Residues 120-198 (RTVYVELLPK…PRKPGIFPKT (79 aa)) enclose the RRM domain. Over residues 214 to 223 (KKKKKKKGRI) the composition is skewed to basic residues. Residue Lys-232 forms a Glycyl lysine isopeptide (Lys-Gly) (interchain with G-Cter in SUMO2) linkage. Thr-252 bears the Phosphothreonine mark. Phosphoserine is present on residues Ser-254 and Ser-257. Phosphothreonine is present on Thr-261. Residues 287 to 296 (KAGKRERSSA) show a composition bias toward basic and acidic residues. Phosphoserine is present on residues Ser-294, Ser-295, and Ser-335. Phosphothreonine is present on Thr-336. Positions 342–351 (PGDRKGDSLS) are enriched in basic and acidic residues. Ser-349 is modified (phosphoserine). A compositionally biased stretch (basic residues) spans 352 to 365 (KGKRKHKKKHKERH). Lys-408 is covalently cross-linked (Glycyl lysine isopeptide (Lys-Gly) (interchain with G-Cter in SUMO2)). Positions 411–432 (SEMETESKAPPGSGQQCSTQEK) are disordered. Residues 423-432 (SGQQCSTQEK) show a composition bias toward polar residues. The region spanning 439 to 552 (QFVTGVIVKI…TEKLITKAEK (114 aa)) is the xRRM domain.

The protein belongs to the LARP7 family. In terms of assembly, core component of the 7SK RNP complex, at least composed of 7SK RNA, LARP7, MEPCE, HEXIM1 (or HEXIM2) and P-TEFb (composed of CDK9 and CCNT1/cyclin-T1). Interacts with METTL16. Interacts with RBM7; upon genotoxic stress this interaction is enhanced, triggering the release of inactive P-TEFb complex from the core, yielding to P-TEFb complex activation. Associates with box C/D small nucleolar ribonucleoprotein (snoRNP) complexes.

Its subcellular location is the nucleus. It is found in the nucleoplasm. Functionally, RNA-binding protein that specifically binds distinct small nuclear RNA (snRNAs) and regulates their processing and function. Specifically binds the 7SK snRNA (7SK RNA) and acts as a core component of the 7SK ribonucleoprotein (RNP) complex, thereby acting as a negative regulator of transcription elongation by RNA polymerase II. The 7SK RNP complex sequesters the positive transcription elongation factor b (P-TEFb) in a large inactive 7SK RNP complex preventing RNA polymerase II phosphorylation and subsequent transcriptional elongation. The 7SK RNP complex also promotes snRNA gene transcription by RNA polymerase II via interaction with the little elongation complex (LEC). LARP7 specifically binds to the highly conserved 3'-terminal U-rich stretch of 7SK RNA; on stimulation, remains associated with 7SK RNA, whereas P-TEFb is released from the complex. LARP7 also acts as a regulator of mRNA splicing fidelity by promoting U6 snRNA processing. Specifically binds U6 snRNAs and associates with a subset of box C/D RNP complexes: promotes U6 snRNA 2'-O-methylation by facilitating U6 snRNA loading into box C/D RNP complexes. U6 snRNA 2'-O-methylation is required for mRNA splicing fidelity. Binds U6 snRNAs with a 5'-CAGGG-3' sequence motif. U6 snRNA processing is required for spermatogenesis. The chain is La-related protein 7 from Rattus norvegicus (Rat).